The following is a 379-amino-acid chain: Probable homogentisate phytyltransferase 2, chloroplastic (379 aa).

A disordered region spans residues 1–39 (MASLASPPLPCRAAATASRSGRPAPRLLGPPPPPASPLL). Residues 1–65 (MASLASPPLP…WSRRDAVRVC (65 aa)) constitute a chloroplast transit peptide. The next 8 helical transmembrane spans lie at 121–141 (WLVF…GYIV), 174–194 (LVVL…GPFI), 195–215 (TSLY…PFRL), 220–240 (VAAF…GVYY), 252–272 (WSSP…VIAI), 299–319 (IAFL…AVAF), 328–348 (TVMV…TWVL), and 361–378 (YYRF…FFPL).

It belongs to the UbiA prenyltransferase family.

The protein localises to the plastid. It localises to the chloroplast thylakoid membrane. The enzyme catalyses phytyl diphosphate + homogentisate + H(+) = 2-methyl-6-phytyl-1,4-benzene-1,4-diol + CO2 + diphosphate. Its pathway is cofactor biosynthesis; tocopherol biosynthesis. In terms of biological role, involved in the synthesis of tocopherol (vitamin E). Catalyzes the condensation of homogentisate and phytyl diphosphate to form dimethylphytylhydrquinone. The protein is Probable homogentisate phytyltransferase 2, chloroplastic (HPT2) of Oryza sativa subsp. japonica (Rice).